We begin with the raw amino-acid sequence, 365 residues long: Mannose-1-phosphate guanylyltransferase catalytic subunit beta (365 aa).

Residues 2–221 (KALILVGGYG…PGFWMDVGQP (220 aa)) are substrate-binding domain. Position 109 (Asp109) interacts with GDP-alpha-D-mannose. Asp109 is a Mg(2+) binding site. Residue Lys161 is part of the active site. A GDP-alpha-D-mannose-binding site is contributed by Asp217. Asp217 is a Mg(2+) binding site. Residues 244–365 (ETGSNIHPTA…VNVPSKDIIM (122 aa)) are hexapeptide repeat domain.

This sequence belongs to the transferase hexapeptide repeat family. Component of the GMPPA-GMPPB mannose-1-phosphate guanylyltransferase complex composed of 4 GMPPA subunits and 8 tag-335/GMPPB subunits; the complex is organized into three layers, a central layer made up of 2 GMPPA dimers sandwiched between two layers each made up of 2 tag-335/GMPPB dimers. Catalytic activity of tag-335/GMPPB is reduced when part of the complex and binding of GDP-alpha-D-Mannose by GMPPA induces allosteric feedback inhibition of tag-335/GMPPB. It depends on Mg(2+) as a cofactor.

It carries out the reaction alpha-D-mannose 1-phosphate + GTP + H(+) = GDP-alpha-D-mannose + diphosphate. Its pathway is nucleotide-sugar biosynthesis; GDP-alpha-D-mannose biosynthesis; GDP-alpha-D-mannose from alpha-D-mannose 1-phosphate (GTP route): step 1/1. With respect to regulation, enzyme activity is reduced by incorporation into the GMPPA-GMPPB mannose-1-phosphate guanylyltransferase complex. Allosterically inhibited, when part of the GMPPA-GMPPB complex, by GDP-alpha-D-mannose binding to GMPPA. Catalytic subunit of the GMPPA-GMPPB mannose-1-phosphate guanylyltransferase complex. Catalyzes the formation of GDP-mannose, an essential precursor of glycan moieties of glycoproteins and glycolipids. Can catalyze the reverse reaction in vitro. Together with GMPPA regulates GDP-alpha-D-mannose levels. This chain is Mannose-1-phosphate guanylyltransferase catalytic subunit beta (tag-335), found in Caenorhabditis elegans.